We begin with the raw amino-acid sequence, 647 residues long: Zinc transporter ZIP4 (647 aa).

A signal peptide spans 1–22 (MASLVSLELGLLLAVLVVTATA). Residues 23 to 327 (SPPAGLLSLL…QDQLSQSERY (305 aa)) lie on the Extracellular side of the membrane. Disulfide bonds link cysteine 57-cysteine 62, cysteine 65-cysteine 111, and cysteine 160-cysteine 195. The tract at residues 236 to 255 (EAHSDHSHRHRGASSRDPVP) is disordered. N-linked (GlcNAc...) asparagine glycosylation is present at asparagine 261. A disulfide bridge links cysteine 270 with cysteine 309. A helical transmembrane segment spans residues 328–348 (LYGSLATLLICLCAVFGLLLL). The Cytoplasmic segment spans residues 349–359 (TCTGCRGVTHY). The chain crosses the membrane as a helical span at residues 360–380 (ILQTFLSLAVGAVTGDAVLHL). Topologically, residues 381–402 (TPKVLGLHTHSEEGLSPQPTWR) are extracellular. A helical transmembrane segment spans residues 403 to 423 (LLAMLAGLYAFFLFENLFNLL). Topologically, residues 424-498 (LPRDPEDLED…LSPELRLLPY (75 aa)) are cytoplasmic. The short motif at 452-454 (LQL) is the Essential for SLC39A4 endocytosis element. The disordered stretch occupies residues 458–484 (ELRQPKPPHEGSRADLVAEESPELLNP). Residues 460-470 (RQPKPPHEGSR) show a composition bias toward basic and acidic residues. Residues 499–518 (MITLGDAVHNFADGLAVGAA) traverse the membrane as a helical segment. Zn(2+) contacts are provided by histidine 507, asparagine 508, and aspartate 511. Topologically, residues 519 to 526 (FASSWKTG) are extracellular. The chain crosses the membrane as a helical span at residues 527-553 (LATSLAVFCHELPHELGDFAALLHAGL). Residues histidine 536, glutamate 537, and histidine 540 each coordinate Zn(2+). Over 554-558 (SVRQA) the chain is Cytoplasmic. A helical transmembrane segment spans residues 559–579 (LLLNLASALTAFAGLYVALAV). The Extracellular segment spans residues 580–586 (GVSEESE). A helical membrane pass occupies residues 587 to 607 (AWILAVATGLFLYVALCDMLP). Topologically, residues 608–617 (AMLKVRDPRP) are cytoplasmic. The helical transmembrane segment at 618 to 638 (WLLFLLHNVGLLGGWTVLLLL) threads the bilayer. The Extracellular segment spans residues 639 to 647 (SLYEDDITF).

This sequence belongs to the ZIP transporter (TC 2.A.5) family. In terms of assembly, homodimer; homodimerization is mediated by the transmembrane domain. The extracellular N-terminal ectodomain is cleaved when cells are Zn(2+) deficient, N-terminally cleaved SLC39A4 is internalized at a faster rate. Post-translationally, under excess Zn(2+) conditions, SLC39A4 on the cell surface is rapidly endocytosed, ubiquitinated and degraded. In terms of processing, glycosylated. Highly expressed in kidney, small intestine, stomach, colon, jejunum and duodenum.

It is found in the cell membrane. Its subcellular location is the recycling endosome membrane. The protein localises to the apical cell membrane. It carries out the reaction Zn(2+)(in) = Zn(2+)(out). With respect to regulation, the Zn(2+) uniporter activity is regulated by zinc availability. Extracellular acidification stimulated SLC39A4-dependent Zn(2+) uptake. Its function is as follows. Selective transporter that mediates the uptake of Zn(2+). Plays an essential role for dietary zinc uptake from small intestine. The Zn(2+) uniporter activity is regulated by zinc availability. Also exhibits polyspecific binding and transport of Cu(2+), Cd(2+) and possibly Ni(2+) but at higher concentrations. This chain is Zinc transporter ZIP4, found in Homo sapiens (Human).